A 321-amino-acid polypeptide reads, in one-letter code: Ferredoxin--NADP reductase (321 aa).

FAD is bound by residues Asp34, Gln42, Tyr47, Val87, Phe119, Asp278, and Thr319.

Belongs to the ferredoxin--NADP reductase type 2 family. In terms of assembly, homodimer. FAD is required as a cofactor.

It catalyses the reaction 2 reduced [2Fe-2S]-[ferredoxin] + NADP(+) + H(+) = 2 oxidized [2Fe-2S]-[ferredoxin] + NADPH. The polypeptide is Ferredoxin--NADP reductase (Streptococcus pneumoniae serotype 4 (strain ATCC BAA-334 / TIGR4)).